Consider the following 411-residue polypeptide: MQFIDEARFVVRGGRGGDGAVSFHREKYRPRGGPDGGRGGDGGSVILRATEDLQTLERYSRRKVISAGRGGHGSGNNRAGERGRDVVLDVPVGTLVYDESGLLADLAEPGQTFVAARGGEGGRGNASFATSRRQAPAFRELGLPGEEREIRLELRVLSDVGLVGLPNAGKSSLLRALSAARPRVGDYPFTTLTPQLGVVEERGYARPFVVADIPGLISGASEGRGLGNRFLRHVARARLLVLVLDASEDPEGAERTLRAELGAAGLSGRPSLVVLNKVDLLDAELRAYLGEAFPGAPQVSARTGEGVGELARLLERRLRELERSAEAAPRPGHRVFRPSWRGLRVERENGAYVVSGREVERLALKTDWDNPEGVEHFQRELERRGVMGALRRAGAGEGDEVRIGDVSFEFR.

The 157-residue stretch at 1 to 157 folds into the Obg domain; it reads MQFIDEARFV…REIRLELRVL (157 aa). Residues 20–45 form a disordered region; that stretch reads AVSFHREKYRPRGGPDGGRGGDGGSV. The segment covering 33–43 has biased composition (gly residues); the sequence is GPDGGRGGDGG. The OBG-type G domain occupies 158-330; that stretch reads SDVGLVGLPN…LERSAEAAPR (173 aa). GTP is bound by residues 164–171, 189–193, 212–215, 276–279, and 311–313; these read GLPNAGKS, FTTLT, DIPG, NKVD, and ARL. Residues serine 171 and threonine 191 each coordinate Mg(2+). The region spanning 335 to 411 is the OCT domain; it reads VFRPSWRGLR…RIGDVSFEFR (77 aa).

The protein belongs to the TRAFAC class OBG-HflX-like GTPase superfamily. OBG GTPase family. As to quaternary structure, monomer. Requires Mg(2+) as cofactor.

It is found in the cytoplasm. Functionally, an essential GTPase which binds GTP, GDP and possibly (p)ppGpp with moderate affinity, with high nucleotide exchange rates and a fairly low GTP hydrolysis rate. Plays a role in control of the cell cycle, stress response, ribosome biogenesis and in those bacteria that undergo differentiation, in morphogenesis control. This Rubrobacter xylanophilus (strain DSM 9941 / JCM 11954 / NBRC 16129 / PRD-1) protein is GTPase Obg.